The chain runs to 62 residues: Small ribosomal subunit protein bS21 (62 aa).

The segment covering 40–52 (KPSVKRKLKSEAA) has biased composition (basic and acidic residues). The tract at residues 40 to 62 (KPSVKRKLKSEAARKRKNKRRRY) is disordered. Basic residues predominate over residues 53–62 (RKRKNKRRRY).

The protein belongs to the bacterial ribosomal protein bS21 family.

The sequence is that of Small ribosomal subunit protein bS21 from Limosilactobacillus fermentum (strain NBRC 3956 / LMG 18251) (Lactobacillus fermentum).